Reading from the N-terminus, the 208-residue chain is Uracil phosphoribosyltransferase (208 aa).

Residues arginine 78, arginine 103, and 130 to 138 (DPMLATGGS) each bind 5-phospho-alpha-D-ribose 1-diphosphate. Residues isoleucine 193 and 198–200 (GDA) each bind uracil. Position 199 (aspartate 199) interacts with 5-phospho-alpha-D-ribose 1-diphosphate.

It belongs to the UPRTase family. Requires Mg(2+) as cofactor.

The catalysed reaction is UMP + diphosphate = 5-phospho-alpha-D-ribose 1-diphosphate + uracil. Its pathway is pyrimidine metabolism; UMP biosynthesis via salvage pathway; UMP from uracil: step 1/1. Allosterically activated by GTP. Catalyzes the conversion of uracil and 5-phospho-alpha-D-ribose 1-diphosphate (PRPP) to UMP and diphosphate. The chain is Uracil phosphoribosyltransferase from Neisseria meningitidis serogroup A / serotype 4A (strain DSM 15465 / Z2491).